The chain runs to 169 residues: Cell division inhibitor SulA (169 aa).

Positions A106–Y112 are ftsZ binding. The lon protease binding stretch occupies residues K162–H169.

This sequence belongs to the SulA family. As to quaternary structure, interacts with FtsZ. In terms of processing, is rapidly cleaved and degraded by the Lon protease once DNA damage is repaired.

Its function is as follows. Component of the SOS system and an inhibitor of cell division. Accumulation of SulA causes rapid cessation of cell division and the appearance of long, non-septate filaments. In the presence of GTP, binds a polymerization-competent form of FtsZ in a 1:1 ratio, thus inhibiting FtsZ polymerization and therefore preventing it from participating in the assembly of the Z ring. This mechanism prevents the premature segregation of damaged DNA to daughter cells during cell division. This chain is Cell division inhibitor SulA, found in Citrobacter koseri (strain ATCC BAA-895 / CDC 4225-83 / SGSC4696).